The sequence spans 711 residues: Ferric/cupric reductase transmembrane component 2 (711 aa).

Positions methionine 1–alanine 23 are cleaved as a signal peptide. At lysine 24–asparagine 164 the chain is on the extracellular side. Residues asparagine 85, asparagine 108, asparagine 120, and asparagine 134 are each glycosylated (N-linked (GlcNAc...) asparagine). Residues isoleucine 165–histidine 185 traverse the membrane as a helical segment. The Cytoplasmic portion of the chain corresponds to cysteine 186–arginine 235. A helical transmembrane segment spans residues leucine 236–tyrosine 256. At glutamate 257–serine 280 the chain is on the extracellular side. Residues serine 280–isoleucine 414 enclose the Ferric oxidoreductase domain. A helical transmembrane segment spans residues glycine 281–leucine 301. Residues glutamate 302–lysine 317 lie on the Cytoplasmic side of the membrane. Heme is bound by residues histidine 316 and histidine 330. Residues tryptophan 318–alanine 340 traverse the membrane as a helical segment. Residue asparagine 341 is glycosylated (N-linked (GlcNAc...) asparagine). Over asparagine 341–tryptophan 353 the chain is Extracellular. Residues glutamine 354–phenylalanine 374 traverse the membrane as a helical segment. The Cytoplasmic portion of the chain corresponds to arginine 375–tyrosine 377. The helical transmembrane segment at phenylalanine 378–tryptophan 398 threads the bilayer. Residues histidine 386 and histidine 400 each contribute to the heme site. The Extracellular portion of the chain corresponds to glutamate 399–histidine 400. A helical transmembrane segment spans residues valine 401–isoleucine 423. One can recognise an FAD-binding FR-type domain in the interval alanine 415–valine 534. Residues arginine 424 to tryptophan 711 are Cytoplasmic-facing. FAD is bound at residue histidine 479 to aspartate 485. NADP(+) is bound by residues glycine 526–glycine 529 and cysteine 677–glycine 678.

It belongs to the ferric reductase (FRE) family. FAD serves as cofactor. Heme is required as a cofactor.

It is found in the cell membrane. It catalyses the reaction 2 a Fe(II)-siderophore + NADP(+) + H(+) = 2 a Fe(III)-siderophore + NADPH. Functionally, metalloreductase responsible for reducing extracellular iron and copper prior to import. Catalyzes the reductive uptake of Fe(3+)-salts and Fe(3+) bound to catecholate or hydroxamate siderophores. Fe(3+) is reduced to Fe(2+), which then dissociates from the siderophore and can be imported by the high-affinity Fe(2+) transport complex in the plasma membrane. Also participates in Cu(2+) reduction and Cu(+) uptake. This Saccharomyces cerevisiae (strain ATCC 204508 / S288c) (Baker's yeast) protein is Ferric/cupric reductase transmembrane component 2 (FRE2).